The chain runs to 574 residues: Sulfate adenylyltransferase (574 aa).

An N-terminal region spans residues 1-169; that stretch reads MANPPHGGVL…IEAINKLNHY (169 aa). The segment at 170–394 is catalytic; the sequence is DYVALRYTPA…LRESSPPRHT (225 aa). Gln-197 serves as a coordination point for sulfate. ATP is bound by residues 197-200 and 291-294; these read QTRN and GRDH. Catalysis depends on residues Thr-198, Arg-199, and Asn-200. Arg-199 contacts sulfate. Ala-295 is a binding site for sulfate. Val-333 serves as a coordination point for ATP. The segment at 395 to 574 is allosteric regulation domain; adenylyl-sulfate kinase-like; that stretch reads QGFTIFLTGY…LETEGFFDRS (180 aa). 3'-phosphoadenylyl sulfate is bound by residues 434–437, Arg-451, 477–478, and Arg-516; these read DTVR and IA.

In the N-terminal section; belongs to the sulfate adenylyltransferase family. It in the C-terminal section; belongs to the APS kinase family. In terms of assembly, homohexamer. Dimer of trimers.

The protein localises to the cytoplasm. It catalyses the reaction sulfate + ATP + H(+) = adenosine 5'-phosphosulfate + diphosphate. Its pathway is sulfur metabolism; hydrogen sulfide biosynthesis; sulfite from sulfate: step 1/3. Its activity is regulated as follows. Allosterically inhibited by 3'-phosphoadenosine 5'-phosphosulfate (PAPS). Its function is as follows. Catalyzes the first intracellular reaction of sulfate assimilation, forming adenosine-5'-phosphosulfate (APS) from inorganic sulfate and ATP. Plays an important role in sulfate activation as a component of the biosynthesis pathway of sulfur-containing amino acids. In Neosartorya fischeri (strain ATCC 1020 / DSM 3700 / CBS 544.65 / FGSC A1164 / JCM 1740 / NRRL 181 / WB 181) (Aspergillus fischerianus), this protein is Sulfate adenylyltransferase.